A 35-amino-acid chain; its full sequence is Flavodoxin (35 aa).

One can recognise a Flavodoxin-like domain in the interval 4–35; that stretch reads IGLFYGTZTGKTESVAEIIDEFGDEVVTLDID.

This sequence belongs to the flavodoxin family. The cofactor is FMN.

In terms of biological role, low-potential electron donor to a number of redox enzymes. This Nostoc sp. (strain MAC) protein is Flavodoxin.